Here is a 347-residue protein sequence, read N- to C-terminus: Melatonin receptor type 1B-B (347 aa).

Topologically, residues 1-36 (MPENIAFLTNSTDLGHVGRALGSSARPAWAIAVLAS) are extracellular. A glycan (N-linked (GlcNAc...) asparagine) is linked at asparagine 10. Residues 37–57 (VLIFTTVVDVLGNLLVIISVF) traverse the membrane as a helical segment. The Cytoplasmic portion of the chain corresponds to 58–72 (RNRKLRNAGNVFVVS). Residues 73-93 (LAFADLVVAFYPYPLVLYAIF) traverse the membrane as a helical segment. Topologically, residues 94-105 (HDGWSLGETQCK) are extracellular. A disulfide bond links cysteine 104 and cysteine 181. The helical transmembrane segment at 106–126 (ISGFLMGLSVIGSVFNITGIA) threads the bilayer. Topologically, residues 127-148 (INRYCYICHSFAYGRLYSFRNT) are cytoplasmic. The chain crosses the membrane as a helical span at residues 149-169 (LLLVALIWALTVLAILPNFFV). The Extracellular portion of the chain corresponds to 170–191 (GSLSYDPRVYSCTFTQTASSSY). A helical membrane pass occupies residues 192 to 212 (TVVVVVVHFLVPIAVVTFCYL). The Cytoplasmic portion of the chain corresponds to 213–244 (RIWVLVIQVRRKVKSEERSRVRPSDLRNFVTM). Residues 245-265 (FVVFVLFAICWAPLNLIGLVV) traverse the membrane as a helical segment. Over 266–278 (AINPEVMAPRVPE) the chain is Extracellular. A helical membrane pass occupies residues 279–299 (WLFVVSYFMAYFNSCLNAIIY). Topologically, residues 300-347 (GLLNRNFRKEYVRIMTAVWIPRRFVTETSRAATDGMRSKPSPAINNNE) are cytoplasmic.

The protein belongs to the G-protein coupled receptor 1 family.

It localises to the cell membrane. High affinity receptor for melatonin. The activity of this receptor is mediated by pertussis toxin sensitive G proteins that inhibits adenylate cyclase activity. The sequence is that of Melatonin receptor type 1B-B (mtnr1bb) from Danio rerio (Zebrafish).